The sequence spans 247 residues: UPF0309 protein Lm4b_02611 (247 aa).

Residues Val-31–Pro-214 form the SIS domain.

This sequence belongs to the UPF0309 family.

This chain is UPF0309 protein Lm4b_02611, found in Listeria monocytogenes serotype 4b (strain CLIP80459).